A 462-amino-acid polypeptide reads, in one-letter code: Argininosuccinate lyase (462 aa).

It belongs to the lyase 1 family. Argininosuccinate lyase subfamily.

It localises to the cytoplasm. It catalyses the reaction 2-(N(omega)-L-arginino)succinate = fumarate + L-arginine. The protein operates within amino-acid biosynthesis; L-arginine biosynthesis; L-arginine from L-ornithine and carbamoyl phosphate: step 3/3. This Lachnoclostridium phytofermentans (strain ATCC 700394 / DSM 18823 / ISDg) (Clostridium phytofermentans) protein is Argininosuccinate lyase.